The sequence spans 652 residues: Adhesion G protein-coupled receptor E3 (652 aa).

The signal sequence occupies residues 1-21 (MQGPLLLPGLCFLLSLFGAVT). Residues 22–357 (QKTKTSCAKC…TSQEEDPVLT (336 aa)) are Extracellular-facing. The region spanning 24–66 (TKTSCAKCPPNASCVNNTHCTCNHGYTSGSGQKLFTFPLETCN) is the EGF-like 1 domain. Disulfide bonds link cysteine 28/cysteine 37, cysteine 31/cysteine 43, cysteine 45/cysteine 65, cysteine 71/cysteine 85, cysteine 79/cysteine 94, and cysteine 96/cysteine 117. N-linked (GlcNAc...) asparagine glycans are attached at residues asparagine 34 and asparagine 39. The region spanning 67 to 118 (DINECTPPYSVYCGFNAVCYNVEGSFYCQCVPGYRLHSGNEQFSNSNENTCQ) is the EGF-like 2; calcium-binding domain. Asparagine 145, asparagine 189, asparagine 202, asparagine 250, asparagine 279, asparagine 327, and asparagine 334 each carry an N-linked (GlcNAc...) asparagine glycan. A GAIN-B domain is found at 183–351 (KVLKIQNDSV…AVLMALTSQE (169 aa)). 2 disulfide bridges follow: cysteine 304-cysteine 333 and cysteine 321-cysteine 335. The segment at 304–351 (CVYWKSTGQGSQWSRDGCFLIHVNKSHTMCNCSHLSSFAVLMALTSQE) is GPS. Residues 358–378 (VITYVGLSVSLLCLLLAALTF) traverse the membrane as a helical segment. Residues 379 to 389 (LLCKAIRNTST) lie on the Cytoplasmic side of the membrane. The chain crosses the membrane as a helical span at residues 390–410 (SLHLQLSLCLFLAHLLFLVGI). At 411-416 (DRTEPK) the chain is on the extracellular side. A helical membrane pass occupies residues 417-437 (VLCSIIAGALHYLYLAAFTWM). Topologically, residues 438 to 464 (LLEGVHLFLTARNLTVVNYSSINRLMK) are cytoplasmic. A helical membrane pass occupies residues 465–485 (WIMFPVGYGVPAVTVAISAAS). Topologically, residues 486 to 508 (WPHLYGTADRCWLHLDQGFMWSF) are extracellular. Residues 509-529 (LGPVCAIFSANLVLFILVFWI) form a helical membrane-spanning segment. Over 530–557 (LKRKLSSLNSEVSTIQNTRMLAFKATAQ) the chain is Cytoplasmic. Residues 558 to 578 (LFILGCTWCLGLLQVGPAAQV) traverse the membrane as a helical segment. Residues 579–580 (MA) are Extracellular-facing. Residues 581–601 (YLFTIINSLQGFFIFLVYCLL) form a helical membrane-spanning segment. The Cytoplasmic portion of the chain corresponds to 602 to 652 (SQQVQKQYQKWFREIVKSKSESETYTLSSKMGPDSKPSEGDVFPGQVKRKY). The tract at residues 621–652 (SESETYTLSSKMGPDSKPSEGDVFPGQVKRKY) is disordered.

This sequence belongs to the G-protein coupled receptor 2 family. Adhesion G-protein coupled receptor (ADGR) subfamily. Forms a heterodimer, consisting of a large extracellular region (alpha subunit) non-covalently linked to a seven-transmembrane moiety (beta subunit). In terms of processing, proteolytically cleaved into 2 subunits, an extracellular alpha subunit and a seven-transmembrane subunit. In terms of tissue distribution, displays a predominantly leukocyte-restricted expression, with highest levels in neutrophils, monocytes and macrophages.

It is found in the cell membrane. The protein resides in the secreted. Orphan receptor that may play a role myeloid-myeloid interactions during immune and inflammatory responses. A ligand for the soluble form of this receptor is present at the surface of monocytes-derived macrophages and activated neutrophils. The polypeptide is Adhesion G protein-coupled receptor E3 (Homo sapiens (Human)).